The sequence spans 220 residues: Octanoyltransferase (220 aa).

The BPL/LPL catalytic domain maps to 31 to 206; it reads DDTPDEVWLV…ELVTLLDYEQ (176 aa). Substrate is bound by residues 70-77, 137-139, and 150-152; these read RGGQVTYH, SLG, and GLA. C168 acts as the Acyl-thioester intermediate in catalysis.

This sequence belongs to the LipB family.

Its subcellular location is the cytoplasm. It catalyses the reaction octanoyl-[ACP] + L-lysyl-[protein] = N(6)-octanoyl-L-lysyl-[protein] + holo-[ACP] + H(+). It participates in protein modification; protein lipoylation via endogenous pathway; protein N(6)-(lipoyl)lysine from octanoyl-[acyl-carrier-protein]: step 1/2. In terms of biological role, catalyzes the transfer of endogenously produced octanoic acid from octanoyl-acyl-carrier-protein onto the lipoyl domains of lipoate-dependent enzymes. Lipoyl-ACP can also act as a substrate although octanoyl-ACP is likely to be the physiological substrate. The sequence is that of Octanoyltransferase from Vibrio campbellii (strain ATCC BAA-1116).